A 246-amino-acid polypeptide reads, in one-letter code: 1-(5-phosphoribosyl)-5-[(5-phosphoribosylamino)methylideneamino] imidazole-4-carboxamide isomerase (246 aa).

The active-site Proton acceptor is aspartate 8. The active-site Proton donor is the aspartate 130.

Belongs to the HisA/HisF family.

The protein localises to the cytoplasm. The enzyme catalyses 1-(5-phospho-beta-D-ribosyl)-5-[(5-phospho-beta-D-ribosylamino)methylideneamino]imidazole-4-carboxamide = 5-[(5-phospho-1-deoxy-D-ribulos-1-ylimino)methylamino]-1-(5-phospho-beta-D-ribosyl)imidazole-4-carboxamide. It functions in the pathway amino-acid biosynthesis; L-histidine biosynthesis; L-histidine from 5-phospho-alpha-D-ribose 1-diphosphate: step 4/9. The sequence is that of 1-(5-phosphoribosyl)-5-[(5-phosphoribosylamino)methylideneamino] imidazole-4-carboxamide isomerase from Alcanivorax borkumensis (strain ATCC 700651 / DSM 11573 / NCIMB 13689 / SK2).